A 239-amino-acid chain; its full sequence is Ditrans,polycis-undecaprenyl-diphosphate synthase ((2E,6E)-farnesyl-diphosphate specific) (239 aa).

Aspartate 18 is a catalytic residue. A Mg(2+)-binding site is contributed by aspartate 18. Substrate-binding positions include 19–22, tryptophan 23, arginine 31, histidine 35, and 63–65; these read GNGR and SSE. Catalysis depends on asparagine 66, which acts as the Proton acceptor. Residues tryptophan 67, arginine 69, arginine 186, and 192–194 each bind substrate; that span reads RIS. Glutamate 205 provides a ligand contact to Mg(2+).

Belongs to the UPP synthase family. In terms of assembly, homodimer. It depends on Mg(2+) as a cofactor.

It carries out the reaction 8 isopentenyl diphosphate + (2E,6E)-farnesyl diphosphate = di-trans,octa-cis-undecaprenyl diphosphate + 8 diphosphate. Its function is as follows. Catalyzes the sequential condensation of isopentenyl diphosphate (IPP) with (2E,6E)-farnesyl diphosphate (E,E-FPP) to yield (2Z,6Z,10Z,14Z,18Z,22Z,26Z,30Z,34E,38E)-undecaprenyl diphosphate (di-trans,octa-cis-UPP). UPP is the precursor of glycosyl carrier lipid in the biosynthesis of bacterial cell wall polysaccharide components such as peptidoglycan and lipopolysaccharide. This chain is Ditrans,polycis-undecaprenyl-diphosphate synthase ((2E,6E)-farnesyl-diphosphate specific), found in Haemophilus influenzae (strain ATCC 51907 / DSM 11121 / KW20 / Rd).